The sequence spans 101 residues: Small ribosomal subunit protein bS18c (101 aa).

Basic residues predominate over residues 1–19 (MDKSKQPFRKSKRSFRRRL). Residues 1 to 26 (MDKSKQPFRKSKRSFRRRLPPIGSGD) are disordered.

Belongs to the bacterial ribosomal protein bS18 family. As to quaternary structure, part of the 30S ribosomal subunit.

It localises to the plastid. Its subcellular location is the chloroplast. In Phalaenopsis aphrodite subsp. formosana (Moth orchid), this protein is Small ribosomal subunit protein bS18c.